Here is a 539-residue protein sequence, read N- to C-terminus: Gamma-2-syntrophin (539 aa).

The 84-residue stretch at 73–156 (TVTLRRQPVG…DVTITVEYLR (84 aa)) folds into the PDZ domain. A PH domain is found at 296–421 (QVVHMGWVNE…WEKAFQRATF (126 aa)).

Belongs to the syntrophin family. Interacts with the dystrophin protein DMD and related proteins DTNA and DTNB.

The protein resides in the cell membrane. It localises to the sarcolemma. The protein localises to the cytoplasm. Its subcellular location is the cytoskeleton. Adapter protein that binds to and probably organizes the subcellular localization of a variety of proteins. May link various receptors to the actin cytoskeleton and the dystrophin glycoprotein complex. This is Gamma-2-syntrophin (Sntg2) from Mus musculus (Mouse).